Consider the following 621-residue polypeptide: Putative 5'-3' exonuclease R528 (621 aa).

Belongs to the 5'-3' exonuclease family.

Its subcellular location is the virion. This chain is Putative 5'-3' exonuclease R528, found in Acanthamoeba polyphaga mimivirus (APMV).